Here is a 583-residue protein sequence, read N- to C-terminus: L-galactono-1,4-lactone dehydrogenase 1, mitochondrial (583 aa).

A mitochondrion-targeting transit peptide spans 1-36; it reads MRRLLLAGILRRASSSPSSHHHLHLVRALSASSPLP. Residues 37–78 constitute a propeptide, removed in mature form; that stretch reads ASDADLRKYAGYALLLLGCGAATYYSFPLPPDALHKKAVPFK. Residues 45-61 form a helical membrane-spanning segment; sequence YAGYALLLLGCGAATYY. The FAD-binding PCMH-type domain occupies 95–266; sequence THEVHTRVLL…AEVTLQCVER (172 aa).

The cofactor is FAD.

It is found in the mitochondrion membrane. It catalyses the reaction L-galactono-1,4-lactone + 4 Fe(III)-[cytochrome c] = L-dehydroascorbate + 4 Fe(II)-[cytochrome c] + 5 H(+). Its pathway is cofactor biosynthesis; L-ascorbate biosynthesis. Functionally, involved in the biosynthesis of ascorbic acid. This Oryza sativa subsp. japonica (Rice) protein is L-galactono-1,4-lactone dehydrogenase 1, mitochondrial (GLDH1).